The primary structure comprises 845 residues: Translation initiation factor IF-2 (845 aa).

2 stretches are compositionally biased toward basic and acidic residues: residues 139–198 (EAKR…EKPA) and 206–228 (FRSEDRESEQKQRGTKFGRKELH). A disordered region spans residues 139 to 253 (EAKRQAAEEE…PQKAAPAAKH (115 aa)). A tr-type G domain is found at 345–512 (SRAAVVTIMG…AILLQAEVME (168 aa)). Residues 354 to 361 (GHVDHGKT) form a G1 region. 354–361 (GHVDHGKT) serves as a coordination point for GTP. Residues 379–383 (GITQH) are G2. The segment at 400-403 (DTPG) is G3. GTP-binding positions include 400–404 (DTPGH) and 454–457 (NKID). The tract at residues 454–457 (NKID) is G4. The G5 stretch occupies residues 490–492 (SAK).

This sequence belongs to the TRAFAC class translation factor GTPase superfamily. Classic translation factor GTPase family. IF-2 subfamily.

It localises to the cytoplasm. One of the essential components for the initiation of protein synthesis. Protects formylmethionyl-tRNA from spontaneous hydrolysis and promotes its binding to the 30S ribosomal subunits. Also involved in the hydrolysis of GTP during the formation of the 70S ribosomal complex. The sequence is that of Translation initiation factor IF-2 from Nitrosococcus oceani (strain ATCC 19707 / BCRC 17464 / JCM 30415 / NCIMB 11848 / C-107).